The following is a 392-amino-acid chain: 8-amino-7-oxononanoate synthase (392 aa).

Arginine 26 is a substrate binding site. Position 112-113 (112-113 (GF)) interacts with pyridoxal 5'-phosphate. A substrate-binding site is contributed by histidine 137. Pyridoxal 5'-phosphate is bound by residues serine 187, histidine 215, and threonine 241. Lysine 244 carries the N6-(pyridoxal phosphate)lysine modification. Threonine 357 serves as a coordination point for substrate.

It belongs to the class-II pyridoxal-phosphate-dependent aminotransferase family. BioF subfamily. Homodimer. The cofactor is pyridoxal 5'-phosphate.

The catalysed reaction is 6-carboxyhexanoyl-[ACP] + L-alanine + H(+) = (8S)-8-amino-7-oxononanoate + holo-[ACP] + CO2. Its pathway is cofactor biosynthesis; biotin biosynthesis. In terms of biological role, catalyzes the decarboxylative condensation of pimeloyl-[acyl-carrier protein] and L-alanine to produce 8-amino-7-oxononanoate (AON), [acyl-carrier protein], and carbon dioxide. The protein is 8-amino-7-oxononanoate synthase of Photobacterium profundum (strain SS9).